The chain runs to 160 residues: Transcription elongation factor GreA (160 aa).

Residues 1–72 are a coiled coil; the sequence is MAEKTYPMTL…QISSLETKIR (72 aa).

This sequence belongs to the GreA/GreB family.

In terms of biological role, necessary for efficient RNA polymerase transcription elongation past template-encoded arresting sites. The arresting sites in DNA have the property of trapping a certain fraction of elongating RNA polymerases that pass through, resulting in locked ternary complexes. Cleavage of the nascent transcript by cleavage factors such as GreA or GreB allows the resumption of elongation from the new 3'terminus. GreA releases sequences of 2 to 3 nucleotides. The protein is Transcription elongation factor GreA of Streptococcus pneumoniae (strain ATCC 700669 / Spain 23F-1).